We begin with the raw amino-acid sequence, 92 residues long: Putative membrane protein insertion efficiency factor (92 aa).

It belongs to the UPF0161 family.

Its subcellular location is the cell membrane. In terms of biological role, could be involved in insertion of integral membrane proteins into the membrane. In Tropheryma whipplei (strain TW08/27) (Whipple's bacillus), this protein is Putative membrane protein insertion efficiency factor.